Consider the following 132-residue polypeptide: Holo-[acyl-carrier-protein] synthase (132 aa).

Residues aspartate 8 and glutamate 57 each coordinate Mg(2+).

It belongs to the P-Pant transferase superfamily. AcpS family. It depends on Mg(2+) as a cofactor.

It localises to the cytoplasm. The catalysed reaction is apo-[ACP] + CoA = holo-[ACP] + adenosine 3',5'-bisphosphate + H(+). Functionally, transfers the 4'-phosphopantetheine moiety from coenzyme A to a Ser of acyl-carrier-protein. The sequence is that of Holo-[acyl-carrier-protein] synthase from Methylobacterium nodulans (strain LMG 21967 / CNCM I-2342 / ORS 2060).